The chain runs to 46 residues: U2-plectoxin-Pt1a (46 aa).

Contains 4 disulfide bonds. Expressed by the venom gland.

It is found in the secreted. Functionally, potent toxin that may paralyze and/or kill insect pests such as H.virescens (lepidoptera), S.exigua (beet armyworm) and M.sexta (tobacco hornworm). The chain is U2-plectoxin-Pt1a from Plectreurys tristis (Spider).